Here is a 328-residue protein sequence, read N- to C-terminus: tRNA uridine(34) hydroxylase (328 aa).

The Rhodanese domain occupies 130–224; the sequence is LDEDTVVLDT…YGKDPEVQGE (95 aa). Catalysis depends on Cys184, which acts as the Cysteine persulfide intermediate.

Belongs to the TrhO family.

The catalysed reaction is uridine(34) in tRNA + AH2 + O2 = 5-hydroxyuridine(34) in tRNA + A + H2O. Its function is as follows. Catalyzes oxygen-dependent 5-hydroxyuridine (ho5U) modification at position 34 in tRNAs. This is tRNA uridine(34) hydroxylase from Streptococcus sanguinis (strain SK36).